The following is a 270-amino-acid chain: MKSLFKVTLLATTMAVALHAPITFAAEAAKPATAADSKAAFKNDDQKSAYALGASLGRYMENSLKEQEKLGIKLDKDQLIAGVQDAFADKSKLSDQEIEQTLQAFEARVKSSAQAKMEKDAADNEAKGKEYREKFAKEKGVKTSSTGLVYQVVEAGKGEAPKDSDTVVVNYKGTLIDGKEFDNSYTRGEPLSFRLDGVIPGWTEGLKNIKKGGKIKLVIPPELAYGKAGVPGIPPNSTLVFDVELLDVKPAPKADAKPEADAKAADSAKK.

The signal sequence occupies residues 1–25 (MKSLFKVTLLATTMAVALHAPITFA). The 86-residue stretch at 164 to 249 (SDTVVVNYKG…VFDVELLDVK (86 aa)) folds into the PPIase FKBP-type domain.

This sequence belongs to the FKBP-type PPIase family.

The protein localises to the periplasm. The enzyme catalyses [protein]-peptidylproline (omega=180) = [protein]-peptidylproline (omega=0). In terms of biological role, PPIases accelerate the folding of proteins. It catalyzes the cis-trans isomerization of proline imidic peptide bonds in oligopeptides. In Escherichia coli (strain K12), this protein is FKBP-type peptidyl-prolyl cis-trans isomerase FkpA (fkpA).